We begin with the raw amino-acid sequence, 93 residues long: YcgL domain-containing protein VSAL_I1068 (93 aa).

Positions 1–84 constitute a YcgL domain; that stretch reads MYCSIYKSSK…PPENLLEKYK (84 aa).

This Aliivibrio salmonicida (strain LFI1238) (Vibrio salmonicida (strain LFI1238)) protein is YcgL domain-containing protein VSAL_I1068.